A 229-amino-acid polypeptide reads, in one-letter code: DNA mismatch repair protein MutH (229 aa).

Belongs to the MutH family.

The protein resides in the cytoplasm. Functionally, sequence-specific endonuclease that cleaves unmethylated GATC sequences. It is involved in DNA mismatch repair. The polypeptide is DNA mismatch repair protein MutH (Escherichia coli (strain SMS-3-5 / SECEC)).